We begin with the raw amino-acid sequence, 420 residues long: Transcription factor TCP4 (420 aa).

A disordered region spans residues Met-1 to Gly-27. Residues Arg-45–Leu-103 enclose the TCP domain. 4 disordered regions span residues Asn-121–Asp-176, Leu-228–Pro-256, His-353–Ile-379, and Gln-399–His-420. A compositionally biased stretch (polar residues) spans Lys-410–His-420.

As to quaternary structure, interacts with AHL27 and AHL29. Interacts with SPL. Interacts with JGB. Interacts with GI (via N-terminus). Expressed in cotyledons, particularly in the vascular region, in leaves, roots, buds, flowers and immature siliques.

It localises to the nucleus. Transcription factor playing a pivotal role in the control of morphogenesis of shoot organs by negatively regulating the expression of boundary-specific genes such as CUC genes, probably through the induction of miRNA (e.g. miR164). Required during early steps of embryogenesis. Participates in ovule development. Activates LOX2 expression by binding to the 5'-GGACCA-3' motif found in its promoter. Activates YUC5 transcription by binding to the 5'-GTGGGCCA-3' motif found in its promoter. Through the activation of YUC5 transcription, integrates the auxin response to a brassinosteroid-dependent molecular circuit that promotes cell elongation in hypocotyls. Activates GIS transcription by binding to the 5'-TGGTCC-3' motif found in its promoter. Involved in the regulation of trichome branching through the activation of GIS transcription. Activates CO transcription by binding to the 5'-GGACCAC-3' motif found in its promoter. Involved in the regulation of photoperiodic flowering through the activation of CO transcription. Activates TCL1 and TCL2 transcription by binding to the 5'-TGGCCA-3' and 5'-GTGGACCA-3' motifS found in their respective promoters. Involved in the suppression of trichome initiaition through the activation of TCL1 and TCL2 transcription. Activates HAT2 transcription by binding to the 5'-TGGTCCAC-3' motif found in its promoter. Through the activation of HAT2 transcription, involved in the auxin-independent reprogramming of mitotic cells to exit division and acquire differentiation competence within the transition zone. This is Transcription factor TCP4 (TCP4) from Arabidopsis thaliana (Mouse-ear cress).